The sequence spans 250 residues: MASRYDRAITVFSPDGHLFQVEYAQEAVKKGSTAVGIRGTNIVVLGVEKKSVAKLQDERTVRKICALDDHVCMAFAGLTADARVVISRARVECQSHKLTVEDPVTVEYITRFIATLKQKYTQSNGRRPFGISALIVGFDDDGIPRLYQTDPSGTYHAWKANAIGRSAKTVREFLEKNYTEDAISNDKEAIKLAIKALLEVVQSGGKNIELAIIRRDQPLKMFSAKEIELEVSEIEREKDEAEKTKSKKST.

This sequence belongs to the peptidase T1A family. Component of the outer alpha-ring of the 20S proteasome core which is composed of 28 subunits that are arranged in four stacked rings, resulting in a barrel-shaped structure. The catalytic chamber with the active sites is on the inside of the barrel. Interacts with canonical subunits of the spermatoproteasome, including proteasome activators PSME4 (also called PA200) and PSME3 (also called PA28-gamma). Interacts with proteasome-interacting proteins chaperones including CCT6B and CCT2, ubiquitin ligases (TRIP12, NEDD4, TRIM36 and RAD18), and ubiquitin specific proteases such as USP9X, USP34, USP5 and USP47. Interacts with meiotic proteins cyclin dependent kinase CDK1 and the ATPase TRIP13 as well as proteins of the synaptonemal complex SIX6OS1 and SYCE3.

It is found in the nucleus. Component of the spermatoproteasome, a proteasome specifically found in testis that promotes acetylation-dependent degradation of histones, thereby participating actively to the exchange of histones during spermatogenesis. The proteasome is a protein complex that degrades unneeded or damaged proteins by proteolysis, a chemical reaction that breaks peptide bonds. Required for 20S core proteasome assembly, essential for the degradation of meiotic proteins RAD51 and RPA1 at late prophase I and the progression of meiosis I during spermatogenesis. Localizes to the synaptonemal complex, a 'zipper'-like structure that holds homologous chromosome pairs in synapsis during meiotic prophase I. The protein is Proteasome subunit alpha type-8 of Mus musculus (Mouse).